The sequence spans 510 residues: Pyruvate kinase, cytosolic isozyme (510 aa).

R50 is a substrate binding site. The K(+) site is built by N52, S54, D84, and T85. Residue 52–55 participates in ATP binding; it reads NFSH. ATP contacts are provided by R91 and K176. E242 is a Mg(2+) binding site. G265, D266, and T298 together coordinate substrate. D266 contributes to the Mg(2+) binding site.

Belongs to the pyruvate kinase family. As to quaternary structure, homotetramer. Mg(2+) serves as cofactor. Requires K(+) as cofactor.

The protein resides in the cytoplasm. It catalyses the reaction pyruvate + ATP = phosphoenolpyruvate + ADP + H(+). The protein operates within carbohydrate degradation; glycolysis; pyruvate from D-glyceraldehyde 3-phosphate: step 5/5. The sequence is that of Pyruvate kinase, cytosolic isozyme from Solanum tuberosum (Potato).